We begin with the raw amino-acid sequence, 271 residues long: Tryptophan synthase alpha chain (271 aa).

Catalysis depends on proton acceptor residues E47 and D58.

Belongs to the TrpA family. Tetramer of two alpha and two beta chains.

The catalysed reaction is (1S,2R)-1-C-(indol-3-yl)glycerol 3-phosphate + L-serine = D-glyceraldehyde 3-phosphate + L-tryptophan + H2O. Its pathway is amino-acid biosynthesis; L-tryptophan biosynthesis; L-tryptophan from chorismate: step 5/5. Functionally, the alpha subunit is responsible for the aldol cleavage of indoleglycerol phosphate to indole and glyceraldehyde 3-phosphate. This is Tryptophan synthase alpha chain from Thermus thermophilus (strain ATCC BAA-163 / DSM 7039 / HB27).